Reading from the N-terminus, the 109-residue chain is Cell cycle protein GpsB (109 aa).

Residues 36-63 (IKDYETYAALVKSLRQEIADLKEELTRK) adopt a coiled-coil conformation.

Belongs to the GpsB family. As to quaternary structure, forms polymers through the coiled coil domains. Interacts with PBP1, MreC and EzrA.

It is found in the cytoplasm. Divisome component that associates with the complex late in its assembly, after the Z-ring is formed, and is dependent on DivIC and PBP2B for its recruitment to the divisome. Together with EzrA, is a key component of the system that regulates PBP1 localization during cell cycle progression. Its main role could be the removal of PBP1 from the cell pole after pole maturation is completed. Also contributes to the recruitment of PBP1 to the division complex. Not essential for septum formation. This Streptococcus pneumoniae serotype 4 (strain ATCC BAA-334 / TIGR4) protein is Cell cycle protein GpsB.